We begin with the raw amino-acid sequence, 142 residues long: MAKRITRIAKLEFMAMQAKPGAELASLGINMPEFTKQFNDATKDRAGDVVPVVITAYDDKSFDFILKTTPAAILLKKAAGIEKGASNAKTQTVATISADKVREIAEYKLVDLNANDVEAAMKIIAGTAKNMGIKITGMEETN.

Belongs to the universal ribosomal protein uL11 family. As to quaternary structure, part of the ribosomal stalk of the 50S ribosomal subunit. Interacts with L10 and the large rRNA to form the base of the stalk. L10 forms an elongated spine to which L12 dimers bind in a sequential fashion forming a multimeric L10(L12)X complex. One or more lysine residues are methylated.

Its function is as follows. Forms part of the ribosomal stalk which helps the ribosome interact with GTP-bound translation factors. The polypeptide is Large ribosomal subunit protein uL11 (Mesoplasma florum (strain ATCC 33453 / NBRC 100688 / NCTC 11704 / L1) (Acholeplasma florum)).